We begin with the raw amino-acid sequence, 105 residues long: MLIGYIFLTIAICSESIGAAMLKVSDGFKKWKPSALVVIGYSLAFYMLSLTLNHIPLSLSYATWSGAGTVLTTVIGVKWFKEDLNAKGLIGILLLLSGVVLLNWP.

Transmembrane regions (helical) follow at residues 2–22, 35–55, 57–77, and 84–104; these read LIGY…AAML, ALVV…LNHI, LSLS…VIGV, and LNAK…LLNW.

The protein belongs to the drug/metabolite transporter (DMT) superfamily. Small multidrug resistance (SMR) (TC 2.A.7.1) family. EbrA/EbrB subfamily. The efflux pump is composed of EbrA and EbrB.

It localises to the cell membrane. In terms of biological role, part of a multidrug efflux pump. Confers resistance to cationic lipophilic dyes such as ethidium bromide, acriflavine, pyronine Y and safranin O. The efflux is probably coupled to an influx of protons. The sequence is that of Multidrug resistance protein EbrA (ebrA) from Bacillus subtilis (strain 168).